Consider the following 371-residue polypeptide: Leu/Ile/Val-binding protein homolog 1 (371 aa).

The N-terminal stretch at 1 to 23 (MRKTLFSGVALAAVIAFGGSAWA) is a signal peptide.

The protein belongs to the leucine-binding protein family.

Component of an amino-acid transport system. This is Leu/Ile/Val-binding protein homolog 1 from Brucella abortus (strain 2308).